A 607-amino-acid polypeptide reads, in one-letter code: Glutamyl-tRNA(Gln) amidotransferase subunit E (607 aa).

The tract at residues 399-428 is disordered; the sequence is GVPEETRGANPDGTTRFLRPRPGAARMYPE.

This sequence belongs to the GatB/GatE family. GatE subfamily. As to quaternary structure, heterodimer of GatD and GatE.

It catalyses the reaction L-glutamyl-tRNA(Gln) + L-glutamine + ATP + H2O = L-glutaminyl-tRNA(Gln) + L-glutamate + ADP + phosphate + H(+). In terms of biological role, allows the formation of correctly charged Gln-tRNA(Gln) through the transamidation of misacylated Glu-tRNA(Gln) in organisms which lack glutaminyl-tRNA synthetase. The reaction takes place in the presence of glutamine and ATP through an activated gamma-phospho-Glu-tRNA(Gln). The GatDE system is specific for glutamate and does not act on aspartate. This Pyrobaculum neutrophilum (strain DSM 2338 / JCM 9278 / NBRC 100436 / V24Sta) (Thermoproteus neutrophilus) protein is Glutamyl-tRNA(Gln) amidotransferase subunit E.